The chain runs to 127 residues: uncharacterized protein (127 aa).

The signal sequence occupies residues 1–23 (MSKPLKFLLWSSLALLLLQIGSG).

This is an uncharacterized protein from Arabidopsis thaliana (Mouse-ear cress).